The following is a 411-amino-acid chain: Arginine deiminase (411 aa).

Cys401 functions as the Amidino-cysteine intermediate in the catalytic mechanism.

Belongs to the arginine deiminase family.

It is found in the cytoplasm. It catalyses the reaction L-arginine + H2O = L-citrulline + NH4(+). The protein operates within amino-acid degradation; L-arginine degradation via ADI pathway; carbamoyl phosphate from L-arginine: step 1/2. In Streptococcus pyogenes serotype M2 (strain MGAS10270), this protein is Arginine deiminase.